The sequence spans 355 residues: Protein RecA (355 aa).

72 to 79 is an ATP binding site; it reads GPESSGKT.

Belongs to the RecA family.

The protein localises to the cytoplasm. Its function is as follows. Can catalyze the hydrolysis of ATP in the presence of single-stranded DNA, the ATP-dependent uptake of single-stranded DNA by duplex DNA, and the ATP-dependent hybridization of homologous single-stranded DNAs. It interacts with LexA causing its activation and leading to its autocatalytic cleavage. The polypeptide is Protein RecA (Wolbachia sp. subsp. Brugia malayi (strain TRS)).